We begin with the raw amino-acid sequence, 818 residues long: MKFTLSWLKQFLETSASVTEIAEALTAIGLEVEEVIDKAAELQKFEVAYITNIKPHPSADKLKLCDVETKSGMLQIVCGARNARAGIKVVLANIGIEIPNGKFKIKESVIRGEKSCGMLCSEEELLLASESEGIIELSEDAVVGENFTKYYGLDDPIFVINVTPNRGDALGVYGIARDLAAKGIGILKELEISVIKSTFISKMKLNVQDKEACPLFTFREIRNLKNKPSPDWLRKLLKNVGVKTISSLVDVTNYISYSFGQPMHAYDADRIKGGITVARHCEKHSDEAISGQQNEIATAALQPRNDVAKCHALNGKEYLLTENDLVIKDESGIQGLAGVIGEADSSCTDSTTNIILEAACFNAKMVAASGRRFQIDTDARYRNERNIDRNFTEKALDIATNLILSICGNGEVSEVVKVGEKESQKKPLDFSACYLEKITGIKLNIKAIEAILNKLGFITDVKGEIIKVIAPSWRHDITILEDIAEEIARIYGYDKIESIKLPELDQDNNKLREHKRISSFKRILASKGYDEVVTNSFMSSEDAKLFAELKEELFLLNPISIGDNYMRPTILPNLLSIVSKNLARSIKDMAFFEVGPSFIDLNTEATYLTAIISGSYNNKNPHSFGRGYDVFDLKGDLELVADYAGLSIDKCIATNGTALPQYYHPTRAVNIGLGKNLLGHFGQIHPKILKYYDINQEIFAFELNITNLPLIKAKFGKRDEFAVSDFQANFRDYAFIVGQDHRVGEIISYINNFNKKLIKSVILFDIYSGDKLPEGKKSIAVKIELQADDRTLSDTDLNSFSKDLVAAISQKFQGTLRE.

Residues 39 to 148 (AAELQKFEVA…EDAVVGENFT (110 aa)) enclose the tRNA-binding domain. The B5 domain occupies 423 to 498 (SQKKPLDFSA…RIYGYDKIES (76 aa)). 4 residues coordinate Mg(2+): aspartate 476, aspartate 482, glutamate 485, and glutamate 486. One can recognise an FDX-ACB domain in the interval 724 to 817 (SDFQANFRDY…ISQKFQGTLR (94 aa)).

The protein belongs to the phenylalanyl-tRNA synthetase beta subunit family. Type 1 subfamily. Tetramer of two alpha and two beta subunits. It depends on Mg(2+) as a cofactor.

It is found in the cytoplasm. The enzyme catalyses tRNA(Phe) + L-phenylalanine + ATP = L-phenylalanyl-tRNA(Phe) + AMP + diphosphate + H(+). The sequence is that of Phenylalanine--tRNA ligase beta subunit from Rickettsia conorii (strain ATCC VR-613 / Malish 7).